A 1530-amino-acid chain; its full sequence is Brefeldin A resistance protein (1530 aa).

Over residues 1–26 (MNQNSDTTHGQALGSTLNHTTEVTRI) the composition is skewed to polar residues. A disordered region spans residues 1–100 (MNQNSDTTHG…SDDSSVDRLA (100 aa)). A glycan (N-linked (GlcNAc...) asparagine) is linked at Asn28. A compositionally biased stretch (low complexity) spans 36–48 (SSSNVDESLDSSN). Basic and acidic residues predominate over residues 54–64 (KASHTNEEYRS). Residue Asn67 is glycosylated (N-linked (GlcNAc...) asparagine). Residues 72–93 (PSSSNEPSPESSSNSDSSSSDD) are compositionally biased toward low complexity. The ABC transporter 1 domain maps to 153–410 (KTFPDIFLQP…FLDMGFDCHP (258 aa)). N-linked (GlcNAc...) asparagine glycans are attached at residues Asn273, Asn334, and Asn450. Residues Ser486 and Ser489 each carry the phosphoserine modification. At Thr491 the chain carries Phosphothreonine. 6 helical membrane passes run 539-559 (AYIGSMAFAFLFQSLIIGSIF), 575-595 (VLFFSILFCALQSLSEIANMF), 620-640 (LIVDLPFRFINISVFSIVLYF), 649-669 (GGFWTYFLFLFIGATCMSAFF), 684-704 (ALGGIGVLAIAIYTGYAIPNI), and 791-811 (LAIIIGYYAFLVFVNIVASET). Residues 843-864 (PLDLETGQDTQGGDVVKESPDN) form a disordered region. Positions 882 to 1125 (FSWRNLNYDI…LLNYFESHGA (244 aa)) constitute an ABC transporter 2 domain. 918 to 925 (GESGAGKT) is an ATP binding site. Residues Asn1159 and Asn1175 are each glycosylated (N-linked (GlcNAc...) asparagine). A Phosphothreonine modification is found at Thr1186. Helical transmembrane passes span 1220 to 1240 (ILMSKLALDIFAGLFIGFTFY), 1255 to 1275 (AVFMATVLAVPLINGLQPKFI), 1300 to 1320 (AIIVEIPFNLVFGTLFFLCWF), 1338 to 1358 (YAWLLYMFFQMYFSTFGQAVA), 1367 to 1387 (ASVVNSLLFTFVITFNGVLQP), and 1392 to 1412 (VGFWHWMHSLTPFTYLIEGLL). N-linked (GlcNAc...) asparagine glycans are attached at residues Asn1449 and Asn1460. A helical transmembrane segment spans residues 1492–1512 (GIFVGYVFFNIFAVLLLFYVF).

It belongs to the ABC transporter superfamily. ABCG family. PDR (TC 3.A.1.205) subfamily.

Its subcellular location is the membrane. Functionally, confers hyper-resistance to brefeldin A (BFA), an inhibitor of intracellular protein transport. Could serve as an efflux pump of various antibiotics. This chain is Brefeldin A resistance protein (bfr1), found in Schizosaccharomyces pombe (strain 972 / ATCC 24843) (Fission yeast).